The following is a 335-amino-acid chain: Meiotic expression up-regulated protein 14 (335 aa).

The protein resides in the cytoplasm. It localises to the cytoskeleton. Its subcellular location is the microtubule organizing center. It is found in the spindle pole body. The protein localises to the nucleus membrane. The protein resides in the prospore membrane. Functionally, has a role in nuclear division during meiosis II where it stabilizes the proper segregation of the spindle pole bodies. Also has a role in the formation and extension of the forespore membrane. This chain is Meiotic expression up-regulated protein 14 (meu14), found in Schizosaccharomyces pombe (strain 972 / ATCC 24843) (Fission yeast).